A 527-amino-acid polypeptide reads, in one-letter code: EGF domain-specific O-linked N-acetylglucosamine transferase (527 aa).

A signal peptide spans 1 to 19 (MLMLLVFGVLLHEVPLSGQ). A Required for optimal activity motif is present at residues 295–297 (DYD). N354 is a glycosylation site (N-linked (GlcNAc...) asparagine). Positions 524-527 (HDEL) match the Prevents secretion from ER motif.

This sequence belongs to the glycosyltransferase 61 family.

Its subcellular location is the endoplasmic reticulum lumen. The catalysed reaction is L-seryl-[protein] + UDP-N-acetyl-alpha-D-glucosamine = 3-O-(N-acetyl-beta-D-glucosaminyl)-L-seryl-[protein] + UDP + H(+). It carries out the reaction L-threonyl-[protein] + UDP-N-acetyl-alpha-D-glucosamine = 3-O-(N-acetyl-beta-D-glucosaminyl)-L-threonyl-[protein] + UDP + H(+). Its function is as follows. Catalyzes the transfer of a single N-acetylglucosamine from UDP-GlcNAc to a serine or threonine residue in extracellular proteins resulting in their modification with a beta-linked N-acetylglucosamine (O-GlcNAc). Specifically glycosylates the Thr residue located between the fifth and sixth conserved cysteines of folded EGF-like domains. This is EGF domain-specific O-linked N-acetylglucosamine transferase (Eogt) from Rattus norvegicus (Rat).